A 204-amino-acid polypeptide reads, in one-letter code: Venom allergen 5 (204 aa).

Cystine bridges form between C4–C17, C8–C101, C26–C94, and C170–C187. An SCP domain is found at 45 to 189; that stretch reads LKEHNDFRQK…WHKHYLVCNY (145 aa).

The protein belongs to the CRISP family. Venom allergen 5-like subfamily. As to expression, expressed by the venom gland.

It is found in the secreted. Functionally, may have an ancestral function in the promotion of ovum fertilization by sperm. The polypeptide is Venom allergen 5 (Vespula flavopilosa (Downy yellowjacket)).